Reading from the N-terminus, the 908-residue chain is PTS system glucose-specific EIICBA component (908 aa).

In terms of domain architecture, PTS EIIC type-1; first part spans 1–264; sequence MQISLVKIRN…YAPLWYTSAG (264 aa). The next 5 membrane-spanning stretches (helical) occupy residues 31 to 51, 71 to 91, 100 to 120, 155 to 175, and 189 to 209; these read LMIP…GDAI, GGNV…AITF, FSAF…IIPV, VFGG…FYAI, and FVPI…LMVW. Residues 265-450 are unknown; it reads GSLQEIANQQ…VSQFTVAVPS (186 aa). The PTS EIIC type-1; second part domain maps to 451–602; it reads LNPAQYSQGK…FNLATPGRGG (152 aa). 5 helical membrane-spanning segments follow: residues 459-479, 487-507, 509-529, 536-556, and 571-591; these read GKFP…ILAA, ASSI…TEPF, FTFL…LAAV, LLSA…ILYG, and VPII…FLTI. In terms of domain architecture, PTS EIIB type-1 spans 631 to 713; the sequence is QIEAGMLLRA…QDIIQGKVNW (83 aa). Cysteine 653 (phosphocysteine intermediate; for EIIB activity) is an active-site residue. One can recognise a PTS EIIA type-1 domain in the interval 762-875; sequence DDTFKNRLVG…DPITPFIVMQ (114 aa). Catalysis depends on histidine 815, which acts as the Tele-phosphohistidine intermediate; for EIIA activity.

It is found in the cell membrane. The catalysed reaction is N(pros)-phospho-L-histidyl-[protein] + D-glucose(out) = D-glucose 6-phosphate(in) + L-histidyl-[protein]. In terms of biological role, the phosphoenolpyruvate-dependent sugar phosphotransferase system (sugar PTS), a major carbohydrate active transport system, catalyzes the phosphorylation of incoming sugar substrates concomitantly with their translocation across the cell membrane. This system is involved in glucose transport. The sequence is that of PTS system glucose-specific EIICBA component (ptsG) from Mycoplasma genitalium (strain ATCC 33530 / DSM 19775 / NCTC 10195 / G37) (Mycoplasmoides genitalium).